The sequence spans 269 residues: MATH domain and coiled-coil domain-containing protein At2g01790 (269 aa).

In terms of domain architecture, MATH spans 6–134; sequence AVKKLWVINN…NGEVDIVAEV (129 aa). Positions 228–269 form a coiled coil; it reads KLDWLEKKLKETGKSRLQEIEEDLKDLKVKCADMDALLEFLR.

This Arabidopsis thaliana (Mouse-ear cress) protein is MATH domain and coiled-coil domain-containing protein At2g01790.